The following is a 673-amino-acid chain: UvrABC system protein B (673 aa).

The region spanning 26–183 is the Helicase ATP-binding domain; it reads ANFEAGLAKQ…RHLTDLQYTR (158 aa). Position 39 to 46 (39 to 46) interacts with ATP; that stretch reads GVTGSGKT. Residues 92-115 carry the Beta-hairpin motif; sequence YYDYYQPEAYVPSSDTFIEKDSSI. Positions 431–597 constitute a Helicase C-terminal domain; it reads QVDDLMSEIH…SVERPISDIM (167 aa). Residues 601–631 are disordered; it reads REDAAEKKSGKGRSKSRQVAEETPDYRAMKP. A compositionally biased stretch (basic and acidic residues) spans 618-630; it reads QVAEETPDYRAMK. In terms of domain architecture, UVR spans 635 to 670; it reads AGKLKSLEQKMYQHAKDLEFEAAAQIRDQIQKLKTA.

It belongs to the UvrB family. In terms of assembly, forms a heterotetramer with UvrA during the search for lesions. Interacts with UvrC in an incision complex.

It localises to the cytoplasm. In terms of biological role, the UvrABC repair system catalyzes the recognition and processing of DNA lesions. A damage recognition complex composed of 2 UvrA and 2 UvrB subunits scans DNA for abnormalities. Upon binding of the UvrA(2)B(2) complex to a putative damaged site, the DNA wraps around one UvrB monomer. DNA wrap is dependent on ATP binding by UvrB and probably causes local melting of the DNA helix, facilitating insertion of UvrB beta-hairpin between the DNA strands. Then UvrB probes one DNA strand for the presence of a lesion. If a lesion is found the UvrA subunits dissociate and the UvrB-DNA preincision complex is formed. This complex is subsequently bound by UvrC and the second UvrB is released. If no lesion is found, the DNA wraps around the other UvrB subunit that will check the other stand for damage. The protein is UvrABC system protein B of Xanthomonas oryzae pv. oryzae (strain PXO99A).